The sequence spans 122 residues: uncharacterized protein (122 aa).

The signal sequence occupies residues 1 to 20 (MGFHFCIWIIFLLPPPCKKC).

Its subcellular location is the secreted. This is an uncharacterized protein from Homo sapiens (Human).